Here is a 61-residue protein sequence, read N- to C-terminus: Photosystem II reaction center protein K (61 aa).

A propeptide spanning residues 1 to 24 is cleaved from the precursor; the sequence is MPNILSLTCICFNSVLCPTSFFFA. The chain crosses the membrane as a helical span at residues 32–52; the sequence is IFNPIVDVMPVIPVLFFLLAF.

It belongs to the PsbK family. In terms of assembly, PSII is composed of 1 copy each of membrane proteins PsbA, PsbB, PsbC, PsbD, PsbE, PsbF, PsbH, PsbI, PsbJ, PsbK, PsbL, PsbM, PsbT, PsbX, PsbY, PsbZ, Psb30/Ycf12, at least 3 peripheral proteins of the oxygen-evolving complex and a large number of cofactors. It forms dimeric complexes.

It localises to the plastid. The protein localises to the chloroplast thylakoid membrane. Functionally, one of the components of the core complex of photosystem II (PSII). PSII is a light-driven water:plastoquinone oxidoreductase that uses light energy to abstract electrons from H(2)O, generating O(2) and a proton gradient subsequently used for ATP formation. It consists of a core antenna complex that captures photons, and an electron transfer chain that converts photonic excitation into a charge separation. The sequence is that of Photosystem II reaction center protein K from Sorghum bicolor (Sorghum).